A 438-amino-acid polypeptide reads, in one-letter code: MPNFIDRRLNPKDKSLGNRQRFLKRAREELKRTIKERVKSGKIADVDAEQNVSMPARGVNEPAFQPDSNSGERRHVLPGNREFAAGDRIPKRGSGGGAGNAGAGTGQSEDEFQFVLSREEVLDLFFEDLELPDMVKLNLKESVTFKRRRAGFSASGSPTNINVGRTMRNSYGRRIALRRPSRREIEALADEIAGLETEPRGRIKHRQRLEELRQKLDRLERRRRRIPYVDPVDIRFNRFEPQPLPNASAVMFCLMDVSASMGEREKDLAKRFFVLLHLFLKRRYERIDIVFIRHTDEAGEVDENTFFYSKQSGGTVVSTALEEMLRVIRERYPAHEWNIYAAQASDGENISGDSERCASLLHDELMGLCQYYAYVEIIDERETEIFGTTDNGTSLWRAYRTVDGEWPNFQMTRIAKPADIYPVFRKLFGKQPEMQLRK.

The segment at 55 to 107 (PARGVNEPAFQPDSNSGERRHVLPGNREFAAGDRIPKRGSGGGAGNAGAGTGQ) is disordered. Over residues 93-105 (GSGGGAGNAGAGT) the composition is skewed to gly residues.

It belongs to the UPF0229 family.

The protein is UPF0229 protein R01398 of Rhizobium meliloti (strain 1021) (Ensifer meliloti).